The chain runs to 76 residues: Precursor of CEP7 (76 aa).

The signal sequence occupies residues 1–27 (MAKCTLTSLILLLIVLVLIQESHIVEG). Positions 28 to 61 (RPLKSSRISNVSKKFAAGNSNLSSKLTTEDHSLD) are excised as a propeptide. Asparagine 37 and asparagine 48 each carry an N-linked (GlcNAc...) asparagine glycan. A disordered region spans residues 49–76 (LSSKLTTEDHSLDAFRPTNPGNSPGIGH). A hydroxyproline mark is found at proline 65, proline 68, and proline 72.

The protein belongs to the C-terminally encoded plant signaling peptide (CEP) family. As to quaternary structure, interacts with CEP receptors (e.g. CEPR1 and CEPR2). In terms of processing, the mature small signaling peptide is generated by proteolytic processing of the longer precursor.

The protein resides in the secreted. The protein localises to the extracellular space. It is found in the apoplast. Extracellular signaling peptide that may regulate primary root growth rate and systemic nitrogen (N)-demand signaling. Mediates up-regulation of genes involved in N uptake and assimilation pathways. The sequence is that of Precursor of CEP7 from Arabidopsis thaliana (Mouse-ear cress).